The chain runs to 778 residues: Endonuclease MutS2 (778 aa).

Residue 328–335 participates in ATP binding; that stretch reads GPNTGGKT. The region spanning 702–777 is the Smr domain; it reads LDLRGKRYEE…GSGATIVTFK (76 aa).

This sequence belongs to the DNA mismatch repair MutS family. MutS2 subfamily. As to quaternary structure, homodimer. Binds to stalled ribosomes, contacting rRNA.

In terms of biological role, endonuclease that is involved in the suppression of homologous recombination and thus may have a key role in the control of bacterial genetic diversity. Acts as a ribosome collision sensor, splitting the ribosome into its 2 subunits. Detects stalled/collided 70S ribosomes which it binds and splits by an ATP-hydrolysis driven conformational change. Acts upstream of the ribosome quality control system (RQC), a ribosome-associated complex that mediates the extraction of incompletely synthesized nascent chains from stalled ribosomes and their subsequent degradation. Probably generates substrates for RQC. In Streptococcus pneumoniae (strain Hungary19A-6), this protein is Endonuclease MutS2.